The sequence spans 260 residues: Thrombin-like enzyme gloshedobin (260 aa).

The signal sequence occupies residues 1 to 18 (MVLIRVQANLLILQLSYA). Positions 19–24 (QKSSEL) are excised as a propeptide. Residues 25 to 252 (IIGGDECNIN…TEWIQSIIAG (228 aa)) enclose the Peptidase S1 domain. Cystine bridges form between Cys-31-Cys-165, Cys-52-Cys-68, Cys-100-Cys-258, Cys-144-Cys-212, Cys-176-Cys-191, and Cys-202-Cys-227. Residues His-67 and Asp-112 each act as charge relay system in the active site. 2 N-linked (GlcNAc...) asparagine glycosylation sites follow: Asn-123 and Asn-124. The active-site Charge relay system is the Ser-206.

The protein belongs to the peptidase S1 family. Snake venom subfamily. In terms of assembly, monomer. Expressed by the venom gland.

Its subcellular location is the secreted. Completely inhibited by PMSF, and N-tosyl-Lphenylalanine chloromethyl ketone (TPCK) and poorly inhibited by benzamidine and derivates. Not inhibited by EDTA, heparin and hirudin. Thrombin-like snake venom serine protease. The recombinant form clots fibrinogen by cleaving fibrinogen Aalpha chain (FGA), and slowly Bbeta chain (FGB). Has amidolytic activities. This chain is Thrombin-like enzyme gloshedobin, found in Gloydius shedaoensis (Shedao island pit viper).